A 320-amino-acid chain; its full sequence is Beta-sarcoglycan (320 aa).

A compositionally biased stretch (low complexity) spans 1–10 (MAAAAAAAAA). The segment at 1-34 (MAAAAAAAAATEQQGSNGPVKKSMREKAVERRNV) is disordered. Topologically, residues 1-67 (MAAAAAAAAA…GLRGRKGNLA (67 aa)) are cytoplasmic. Residues 23–34 (SMREKAVERRNV) show a composition bias toward basic and acidic residues. A helical; Signal-anchor for type II membrane protein transmembrane segment spans residues 68–88 (ICVIVLLFILAVINLLITLVI). Topologically, residues 89-320 (WAVIRIGPNG…VSDNPCGNTH (232 aa)) are extracellular. 3 N-linked (GlcNAc...) asparagine glycosylation sites follow: Asn-160, Asn-213, and Asn-260. 2 disulfides stabilise this stretch: Cys-290–Cys-316 and Cys-292–Cys-309.

The protein belongs to the sarcoglycan beta/delta/gamma/zeta family. Cross-link to form 2 major subcomplexes: one consisting of SGCB, SGCD and SGCG and the other consisting of SGCB and SGCD. The association between SGCB and SGCG is particularly strong while SGCA is loosely associated with the other sarcoglycans. Post-translationally, disulfide bonds are present. As to expression, most strongly expressed in skeletal and heart muscle. Also detected in proliferating myoblasts.

The protein resides in the cell membrane. Its subcellular location is the sarcolemma. It is found in the cytoplasm. It localises to the cytoskeleton. Its function is as follows. Component of the sarcoglycan complex, a subcomplex of the dystrophin-glycoprotein complex which forms a link between the F-actin cytoskeleton and the extracellular matrix. This is Beta-sarcoglycan (Sgcb) from Mus musculus (Mouse).